A 92-amino-acid polypeptide reads, in one-letter code: Protein S100-B (92 aa).

Position 2 is an N-acetylserine (Ser-2). EF-hand domains lie at 13 to 48 (DVFH…LEEI) and 49 to 84 (KEQE…VTTA). Residue His-16 coordinates Zn(2+). The Ca(2+) site is built by Ser-19 and Glu-22. Zn(2+) is bound at residue His-26. Lys-27, Glu-32, Asp-62, Asp-64, Asp-66, Glu-68, and Glu-73 together coordinate Ca(2+). 2 residues coordinate Zn(2+): His-86 and His-91.

The protein belongs to the S-100 family. Dimer of either two alpha chains, or two beta chains, or one alpha and one beta chain. The S100B dimer binds two molecules of STK38. Interacts with CACYBP in a calcium-dependent manner. Interacts with ATAD3A; this interaction probably occurs in the cytosol prior to ATAD3A mitochondrial targeting. Interacts with S100A6. The S100B dimer interacts with two molecules of CAPZA1. Interacts with AGER. Interacts with PPP5C (via TPR repeats); the interaction is calcium-dependent and modulates PPP5C activity. Interacts with TPPP; this interaction inhibits TPPP dimerization. Interacts with isoform CLSTN3beta of CLSTN3; interaction promotes secretion. In terms of tissue distribution, although predominant among the water-soluble brain proteins, S100 is also found in a variety of other tissues.

The protein localises to the cytoplasm. It is found in the nucleus. The protein resides in the secreted. Small zinc- and- and calcium-binding protein that is highly expressed in astrocytes and constitutes one of the most abundant soluble proteins in brain. Weakly binds calcium but binds zinc very tightly-distinct binding sites with different affinities exist for both ions on each monomer. Physiological concentrations of potassium ion antagonize the binding of both divalent cations, especially affecting high-affinity calcium-binding sites. Acts as a neurotrophic factor that promotes astrocytosis and axonal proliferation. Involved in innervation of thermogenic adipose tissue by acting as an adipocyte-derived neurotrophic factor that promotes sympathetic innervation of adipose tissue. Binds to and initiates the activation of STK38 by releasing autoinhibitory intramolecular interactions within the kinase. Interaction with AGER after myocardial infarction may play a role in myocyte apoptosis by activating ERK1/2 and p53/TP53 signaling. Could assist ATAD3A cytoplasmic processing, preventing aggregation and favoring mitochondrial localization. May mediate calcium-dependent regulation on many physiological processes by interacting with other proteins, such as TPR-containing proteins, and modulating their activity. This is Protein S100-B from Rattus norvegicus (Rat).